Consider the following 236-residue polypeptide: 2,3,4,5-tetrahydropyridine-2,6-dicarboxylate N-acetyltransferase (236 aa).

Belongs to the transferase hexapeptide repeat family. DapH subfamily.

The catalysed reaction is (S)-2,3,4,5-tetrahydrodipicolinate + acetyl-CoA + H2O = L-2-acetamido-6-oxoheptanedioate + CoA. It functions in the pathway amino-acid biosynthesis; L-lysine biosynthesis via DAP pathway; LL-2,6-diaminopimelate from (S)-tetrahydrodipicolinate (acetylase route): step 1/3. In terms of biological role, catalyzes the transfer of an acetyl group from acetyl-CoA to tetrahydrodipicolinate. In Clostridium botulinum (strain Langeland / NCTC 10281 / Type F), this protein is 2,3,4,5-tetrahydropyridine-2,6-dicarboxylate N-acetyltransferase.